Here is a 59-residue protein sequence, read N- to C-terminus: Large ribosomal subunit protein uL30 (59 aa).

This sequence belongs to the universal ribosomal protein uL30 family. Part of the 50S ribosomal subunit.

The polypeptide is Large ribosomal subunit protein uL30 (Psychrobacter cryohalolentis (strain ATCC BAA-1226 / DSM 17306 / VKM B-2378 / K5)).